The primary structure comprises 269 residues: Orotidine 5'-phosphate decarboxylase (269 aa).

The active-site Proton donor is the Lys-92.

This sequence belongs to the OMP decarboxylase family. Type 2 subfamily.

It catalyses the reaction orotidine 5'-phosphate + H(+) = UMP + CO2. Its pathway is pyrimidine metabolism; UMP biosynthesis via de novo pathway; UMP from orotate: step 2/2. The polypeptide is Orotidine 5'-phosphate decarboxylase (Natronomonas pharaonis (strain ATCC 35678 / DSM 2160 / CIP 103997 / JCM 8858 / NBRC 14720 / NCIMB 2260 / Gabara) (Halobacterium pharaonis)).